The sequence spans 391 residues: Processive diacylglycerol beta-glucosyltransferase (391 aa).

This sequence belongs to the glycosyltransferase 28 family. UgtP subfamily.

Its subcellular location is the cell membrane. It carries out the reaction a 1,2-diacyl-3-O-(beta-D-glucopyranosyl)-sn-glycerol + UDP-alpha-D-glucose = a 1,2-diacyl-3-O-(beta-D-Glc-(1-&gt;6)-beta-D-Glc)-sn-glycerol + UDP + H(+). The enzyme catalyses a 1,2-diacyl-sn-glycerol + UDP-alpha-D-glucose = a 1,2-diacyl-3-O-(beta-D-glucopyranosyl)-sn-glycerol + UDP + H(+). The protein operates within glycolipid metabolism; diglucosyl-diacylglycerol biosynthesis. Its function is as follows. Processive glucosyltransferase involved in the biosynthesis of both the bilayer- and non-bilayer-forming membrane glucolipids. Is able to successively transfer two glucosyl residues to diacylglycerol (DAG), thereby catalyzing the formation of beta-monoglucosyl-DAG (3-O-(beta-D-glucopyranosyl)-1,2-diacyl-sn-glycerol) and beta-diglucosyl-DAG (3-O-(beta-D-glucopyranosyl-beta-(1-&gt;6)-D-glucopyranosyl)-1,2-diacyl-sn-glycerol). Beta-diglucosyl-DAG is the predominant glycolipid found in Bacillales and is also used as a membrane anchor for lipoteichoic acid (LTA). This chain is Processive diacylglycerol beta-glucosyltransferase, found in Staphylococcus carnosus (strain TM300).